The chain runs to 748 residues: Far upstream element-binding protein 2 (748 aa).

Positions 1 to 78 (MSDYNTGGPP…GIRKDAFADA (78 aa)) are disordered. Ser-2 bears the N-acetylserine mark. Over residues 8 to 17 (GPPPGPPPPA) the composition is skewed to pro residues. Composition is skewed to gly residues over residues 18–28 (GGGGGAAGAGG) and 36–69 (GAGDRGGGGPGGGGPGGGGASGGPSQPPGGGGPG). An Omega-N-methylarginine modification is found at Arg-40. Position 88 is an N6-acetyllysine (Lys-88). A disordered region spans residues 90–148 (GGDAATTVNNNTPDFGFGGQKRQLEDGDQPDSKKLASQGDSIGSQLGPIHPPPRTSMTE). Thr-101 is modified (phosphothreonine). Positions 111–123 (RQLEDGDQPDSKK) are enriched in basic and acidic residues. A Glycyl lysine isopeptide (Lys-Gly) (interchain with G-Cter in SUMO1); alternate cross-link involves residue Lys-122. Lys-122 participates in a covalent cross-link: Glycyl lysine isopeptide (Lys-Gly) (interchain with G-Cter in SUMO2); alternate. Phosphoserine occurs at positions 126, 130, 182, 185, 194, and 275. 3 KH domains span residues 145 to 209 (SMTE…KMML), 234 to 300 (GTVQ…CEMV), and 323 to 387 (GGGI…ARII). Residues 394–422 (LRSGPPGPPGAPGMPPGGRGRGRGQGNWG) are disordered. Positions 398 to 408 (PPGPPGAPGMP) are enriched in pro residues. Gly residues predominate over residues 409 to 422 (PGGRGRGRGQGNWG). Arg-412, Arg-414, Arg-416, and Arg-443 each carry omega-N-methylarginine. The 68-residue stretch at 425–492 (GGEMTFSIPT…QQIDHAKQLI (68 aa)) folds into the KH 4 domain. The residue at position 481 (Ser-481) is a Phosphoserine. The interval 498-570 (GPLCPVGPGP…HDPNKAAAAA (73 aa)) is disordered. 2 stretches are compositionally biased toward pro residues: residues 502–521 (PVGPGPGGPGPAGPMGPFNP) and 529–543 (PGAPPHAGGPPPHQY). Repeat unit 1 spans residues 572–583 (DPNAAWAAYYSH). The tract at residues 572–685 (DPNAAWAAYY…SAAWAEYYRQ (114 aa)) is 4 X 12 AA imperfect repeats. Over residues 588 to 614 (PPGPVPGPAPAPAAPPAQGEPPQPPPT) the composition is skewed to pro residues. Disordered regions lie at residues 588–650 (PPGP…KAWE), 659–678 (VATGGGPGAPPGSQPDYSAA), and 689–735 (YYGQ…PALV). 3 consecutive repeat copies span residues 618 to 629 (DYTKAWEEYYKK), 644 to 655 (DYTKAWEEYYKK), and 674 to 685 (DYSAAWAEYYRQ).

Belongs to the KHSRP family. In terms of assembly, part of a ternary complex containing FUBP2, PTBP1, PTBP2 and HNRPH1. Interacts with PARN. Interacts with PQBP1.

The protein localises to the nucleus. It is found in the cytoplasm. Its function is as follows. Binds to the dendritic targeting element and may play a role in mRNA trafficking. Part of a ternary complex that binds to the downstream control sequence (DCS) of the pre-mRNA. Mediates exon inclusion in transcripts that are subject to tissue-specific alternative splicing. May interact with single-stranded DNA from the far-upstream element (FUSE). May activate gene expression. Also involved in degradation of inherently unstable mRNAs that contain AU-rich elements (AREs) in their 3'-UTR, possibly by recruiting degradation machinery to ARE-containing mRNAs. This chain is Far upstream element-binding protein 2 (Khsrp), found in Mus musculus (Mouse).